Here is a 458-residue protein sequence, read N- to C-terminus: Protein adenylyltransferase FICD (458 aa).

Over methionine 1–arginine 23 the chain is Cytoplasmic. Residues phenylalanine 24–leucine 44 form a helical; Signal-anchor for type II membrane protein membrane-spanning segment. Residues glycine 45–proline 458 are Lumenal-facing. Serine 79 is subject to O-AMP-serine; by autocatalysis. Threonine 80 is subject to O-AMP-threonine; by autocatalysis. TPR repeat units lie at residues alanine 106–phenylalanine 139 and valine 140–histidine 173. O-AMP-threonine; by autocatalysis is present on threonine 183. The Inhibitory (S/T)XXXE(G/N) motif signature appears at threonine 230–glycine 235. Glutamate 234 lines the ATP pocket. Asparagine 275 carries N-linked (GlcNAc...) asparagine glycosylation. Positions valine 285–lysine 420 constitute a Fido domain. Valine 316–histidine 319 contacts ATP. Histidine 363 is a catalytic residue. ATP is bound by residues aspartate 367–arginine 374, tyrosine 399–tyrosine 400, and asparagine 407.

This sequence belongs to the fic family. As to quaternary structure, homodimer. Interacts with HD. It depends on Mg(2+) as a cofactor. The cofactor is Mn(2+). In terms of processing, auto-AMPylated in vitro.

Its subcellular location is the endoplasmic reticulum membrane. The enzyme catalyses L-tyrosyl-[protein] + ATP = O-(5'-adenylyl)-L-tyrosyl-[protein] + diphosphate. It carries out the reaction 3-O-(5'-adenylyl)-L-threonyl-[protein] + H2O = L-threonyl-[protein] + AMP + H(+). It catalyses the reaction L-threonyl-[protein] + ATP = 3-O-(5'-adenylyl)-L-threonyl-[protein] + diphosphate. With respect to regulation, the side chain of Glu-234 determines which of the two opposing activities (AMPylase or de-AMPylase) will take place. In response to endoplasmic reticulum stress, mediates de-AMPylase activity. Adenylyltransferase activity is inhibited by the inhibitory helix present at the N-terminus: Glu-234 binds ATP and competes with ATP-binding at Arg-374, thereby preventing adenylyltransferase activity. In unstressed cells, disengagement of Glu-234 promotes adenylyltransferase activity. Activation dissociates ATP-binding from Glu-234, allowing ordered binding of the entire ATP moiety with the alpha-phosphate in an orientation that is productive for accepting an incoming target hydroxyl side chain. In terms of biological role, protein that can both mediate the addition of adenosine 5'-monophosphate (AMP) to specific residues of target proteins (AMPylation), and the removal of the same modification from target proteins (de-AMPylation), depending on the context. The side chain of Glu-231 determines which of the two opposing activities (AMPylase or de-AMPylase) will take place. Acts as a key regulator of the ERN1/IRE1-mediated unfolded protein response (UPR) by mediating AMPylation or de-AMPylation of HSPA5/BiP. In unstressed cells, acts as an adenylyltransferase by mediating AMPylation of HSPA5/BiP at 'Thr-518', thereby inactivating it. In response to endoplasmic reticulum stress, acts as a phosphodiesterase by mediating removal of ATP (de-AMPylation) from HSPA5/BiP at 'Thr-518', leading to restore HSPA5/BiP activity. Although it is able to AMPylate RhoA, Rac and Cdc42 Rho GTPases in vitro, Rho GTPases do not constitute physiological substrates. This chain is Protein adenylyltransferase FICD, found in Rattus norvegicus (Rat).